A 260-amino-acid chain; its full sequence is Na(+)-translocating NADH-quinone reductase subunit C (260 aa).

A helical transmembrane segment spans residues 12-32 (LLVIILLSLACSIIVAGSAVL). Position 226 is an FMN phosphoryl threonine (T226).

Belongs to the NqrC family. In terms of assembly, composed of six subunits; NqrA, NqrB, NqrC, NqrD, NqrE and NqrF. FMN is required as a cofactor.

The protein localises to the cell inner membrane. It carries out the reaction a ubiquinone + n Na(+)(in) + NADH + H(+) = a ubiquinol + n Na(+)(out) + NAD(+). NQR complex catalyzes the reduction of ubiquinone-1 to ubiquinol by two successive reactions, coupled with the transport of Na(+) ions from the cytoplasm to the periplasm. NqrA to NqrE are probably involved in the second step, the conversion of ubisemiquinone to ubiquinol. The chain is Na(+)-translocating NADH-quinone reductase subunit C from Pasteurella multocida (strain Pm70).